The sequence spans 72 residues: PAMP-induced secreted peptide 1 (72 aa).

Positions 1-30 are cleaved as a signal peptide; it reads MRRVSWSTVLIVVVMVSLFFVEHVVVPAAA. A 4-hydroxyproline mark is found at P65 and P67.

In terms of processing, contains 4-hydroxyproline; hydroxylated on Pro-65 and Pro-67. As to expression, expressed in guard cells, hydathodes, leaf trichomes, and vascular tissues of leaves and roots.

The protein localises to the secreted. It is found in the extracellular space. Its subcellular location is the apoplast. Functionally, endogenous secreted peptide that acts as elicitor of immune response and positive regulator of defense response. Amplifies the immune response triggered by flg22, the active epitope of bacterial flagellin. Acts as a negative regulator of root growth. The chain is PAMP-induced secreted peptide 1 from Arabidopsis thaliana (Mouse-ear cress).